Consider the following 517-residue polypeptide: E3 ubiquitin-protein ligase TRIM65 (517 aa).

Alanine 2 bears the N-acetylalanine mark. The RING-type zinc finger occupies 12–51 (CAICLGLYQDPVTLPCGHNFCGACIRDWWDRCGKACPECR). Positions 75 to 94 (AGPARDPGPDPGPGPDPAAR) are disordered. The B box-type zinc finger occupies 90–137 (DPAARCPRHGRPLELFCRTEGRCVCSVCTVRECRLHERALLDAERLKR). Zn(2+) is bound by residues cysteine 95, histidine 98, cysteine 117, and histidine 125. The stretch at 139-227 (AQLRASLEVT…QRLRVHLEAV (89 aa)) forms a coiled coil. Position 185 is a phosphoserine (serine 185). Residue lysine 206 forms a (Microbial infection) Glycyl lysine isopeptide (Lys-Gly) (interchain with G-Cter in ubiquitin) linkage. The 194-residue stretch at 313–506 (APVPSTVCPL…LTLCHQPGAV (194 aa)) folds into the B30.2/SPRY domain.

It belongs to the TRIM/RBCC family. Homo-multimerizes. Interacts with ARRDC4.

The protein localises to the cytoplasm. The catalysed reaction is S-ubiquitinyl-[E2 ubiquitin-conjugating enzyme]-L-cysteine + [acceptor protein]-L-lysine = [E2 ubiquitin-conjugating enzyme]-L-cysteine + N(6)-ubiquitinyl-[acceptor protein]-L-lysine.. It participates in protein modification; protein ubiquitination. E3 ubiquitin ligase that plays a role in several processes including innate immnity, autophagy or inflammation. Negatively regulates miRNAs by modulating the ubiquitination and stability of TNRC6A, a protein involved in RNA-mediated gene silencing by both micro-RNAs (miRNAs) and short interfering RNAs. This ubiquitination results in the suppressed expression of miR-138-5p leading to increased autophagy. Upon enteroviral infection, promotes 'Lys-63'-mediated ubiquitination activation of IFIH1/MDA5 leading to innate signaling cascade. Mechanistically, selectively recognizes MDA5 filaments that occur on dsRNAs. Plays also a role in limitation of inflammation through different mechanisms. First, promotes 'Lys-48'-mediated ubiquitination of VCAM1 leading to its degradation and limitation of LPS-induced lung inflammation. In addition, negatively regulates inflammasome activation by promoting 'lys48'-linked ubiquitination of NLRP3 which is critical for the inhibition of NLRP3 inflammasome activation in resting macrophages. The sequence is that of E3 ubiquitin-protein ligase TRIM65 (TRIM65) from Homo sapiens (Human).